Consider the following 425-residue polypeptide: Serine--tRNA ligase (425 aa).

230–232 (TAE) lines the L-serine pocket. 261–263 (RSE) provides a ligand contact to ATP. Glutamate 284 contacts L-serine. Position 348-351 (348-351 (EISS)) interacts with ATP. Serine 384 lines the L-serine pocket.

It belongs to the class-II aminoacyl-tRNA synthetase family. Type-1 seryl-tRNA synthetase subfamily. In terms of assembly, homodimer. The tRNA molecule binds across the dimer.

It is found in the cytoplasm. The enzyme catalyses tRNA(Ser) + L-serine + ATP = L-seryl-tRNA(Ser) + AMP + diphosphate + H(+). The catalysed reaction is tRNA(Sec) + L-serine + ATP = L-seryl-tRNA(Sec) + AMP + diphosphate + H(+). Its pathway is aminoacyl-tRNA biosynthesis; selenocysteinyl-tRNA(Sec) biosynthesis; L-seryl-tRNA(Sec) from L-serine and tRNA(Sec): step 1/1. In terms of biological role, catalyzes the attachment of serine to tRNA(Ser). Is also able to aminoacylate tRNA(Sec) with serine, to form the misacylated tRNA L-seryl-tRNA(Sec), which will be further converted into selenocysteinyl-tRNA(Sec). The sequence is that of Serine--tRNA ligase from Streptococcus pyogenes serotype M5 (strain Manfredo).